The chain runs to 736 residues: 3',5'-cyclic-AMP phosphodiesterase 4B (736 aa).

2 disordered regions span residues 51–77 (QLPP…PTTL) and 96–116 (DVEN…SSSS). S56 carries the post-translational modification Phosphoserine. Residue S290 is modified to Phosphoserine. Positions 330 to 659 (VNTENEDHLA…NWYQSMIPQS (330 aa)) constitute a PDEase domain. The Proton donor role is filled by H406. H406 is a 3',5'-cyclic AMP binding site. AMP-binding residues include H406 and H410. Residues H410, H446, D447, and D564 each coordinate Zn(2+). Residues D447, D564, Q615, and F618 each coordinate AMP. A Mg(2+)-binding site is contributed by D447. Position 447 (D447) interacts with Mn(2+). 3',5'-cyclic AMP-binding residues include Q615 and F618. S659 and S661 each carry phosphoserine. The interval 685–736 (EEEDSEGPEKEGEGPNYFSSTKTLCVIDPENRDSLEETDIDIATEDKSLIDT) is disordered.

The protein belongs to the cyclic nucleotide phosphodiesterase family. PDE4 subfamily. In terms of assembly, interacts with DISC1. Requires Zn(2+) as cofactor. It depends on Mg(2+) as a cofactor. Mn(2+) serves as cofactor. As to expression, widely expressed. In terms of tissue distribution, expressed in brain, heart, lung and liver. Expressed in liver and brain.

Its subcellular location is the cytoplasm. It is found in the cell membrane. The enzyme catalyses 3',5'-cyclic AMP + H2O = AMP + H(+). Its pathway is purine metabolism; 3',5'-cyclic AMP degradation; AMP from 3',5'-cyclic AMP: step 1/1. Its activity is regulated as follows. Inhibited by rolipram. Its function is as follows. Hydrolyzes the second messenger cAMP, which is a key regulator of many important physiological processes. The protein is 3',5'-cyclic-AMP phosphodiesterase 4B of Rattus norvegicus (Rat).